The chain runs to 185 residues: Peptidyl-tRNA hydrolase (185 aa).

Residue Tyr-14 participates in tRNA binding. His-19 functions as the Proton acceptor in the catalytic mechanism. Tyr-64, Asn-66, and Asn-112 together coordinate tRNA.

This sequence belongs to the PTH family. Monomer.

It localises to the cytoplasm. The enzyme catalyses an N-acyl-L-alpha-aminoacyl-tRNA + H2O = an N-acyl-L-amino acid + a tRNA + H(+). Its function is as follows. Hydrolyzes ribosome-free peptidyl-tRNAs (with 1 or more amino acids incorporated), which drop off the ribosome during protein synthesis, or as a result of ribosome stalling. Functionally, catalyzes the release of premature peptidyl moieties from peptidyl-tRNA molecules trapped in stalled 50S ribosomal subunits, and thus maintains levels of free tRNAs and 50S ribosomes. This chain is Peptidyl-tRNA hydrolase, found in Shouchella clausii (strain KSM-K16) (Alkalihalobacillus clausii).